Here is a 296-residue protein sequence, read N- to C-terminus: Giardin subunit alpha-4 (296 aa).

Annexin repeat units lie at residues 3–72 (ATVS…VHAW), 74–146 (SRFE…GWVK), 153–223 (KSIK…AHHW), and 226–294 (DPGQ…VFWR).

This sequence belongs to the annexin family. Giardin subunit alpha subfamily.

The protein resides in the cytoplasm. Its subcellular location is the cytoskeleton. Giardins are involved in parasite attachment to the intestinal mucosa and in the cytoskeletal disassembly and reassembly that marks the transition from infectious trophozoite to transmissible cyst. They may interact with other cytoskeletal proteins such as microtubules in the microribbons or crossbridges, to maintain the integrity of the ventral disk. This chain is Giardin subunit alpha-4, found in Giardia intestinalis (Giardia lamblia).